The following is a 531-amino-acid chain: MSSFDKNDERAQLMVPKSINEGKVVKLSQKTLVTKKIERQVVPEEKYIAGLDKIIEKDYFPHLKKMQAQKEYLEAVANKDINKIKELQMKFCSTGSVRTDRSFRTPITTRSTTEAPDVSSFDADTPGPSSASTSSAHDWMQSPMPFANEEGDNEALNRKRKKKKEETLTSYLNKYTSEDNASFEELAKVMREREDARRPWVYKAEEEHNKNLVTRQAIAAEADVQLALKHAVDADDNRPLNVDNWAYKAWNTVLFNPDGAALTPAEIADAARKQQTEINKRGTRFPDSGKLKPSDEAMTRAAVSHALANAGKVDFLGNEVTPANSFKLLETPNPNPDDMDSPLMTWGEIDGTPFRLDAPDVTEHSLPGAAPVFKIPEVPYREKIAQSMNDSIAAKYRDKRKVAMRAAEGAHFSRTPGFGSKRVSDKLAQLSPAAQKLATKKLGLKMLPAHKSPFASPKIMSNWSRPSSSKRSTTPGSAWSRGSTTPGSSWSQGAQTPGTPGIESMIRRKGDNVGPSTSAGAADRANAGDFF.

Disordered regions lie at residues 104–163 (RTPI…RKKK) and 453–531 (PFAS…GDFF). A compositionally biased stretch (polar residues) spans 105 to 114 (TPITTRSTTE). Composition is skewed to low complexity over residues 125-136 (TPGPSSASTSSA) and 464-477 (SRPS…TPGS). Residues 480–498 (SRGSTTPGSSWSQGAQTPG) show a composition bias toward polar residues.

This sequence belongs to the ESS2 family.

It is found in the nucleus. Regulates pre-mRNA splicing. The chain is Splicing factor ESS-2 (ess-2) from Caenorhabditis elegans.